We begin with the raw amino-acid sequence, 39 residues long: Photosystem II reaction center protein Psb30 (39 aa).

A helical membrane pass occupies residues Ile12 to Leu32.

Belongs to the Psb30/Ycf12 family. In terms of assembly, PSII is composed of 1 copy each of membrane proteins PsbA, PsbB, PsbC, PsbD, PsbE, PsbF, PsbH, PsbI, PsbJ, PsbK, PsbL, PsbM, PsbT, PsbX, PsbY, PsbZ, Psb30/Ycf12, peripheral proteins PsbO, CyanoQ (PsbQ), PsbU, PsbV and a large number of cofactors. It forms dimeric complexes.

It is found in the cellular thylakoid membrane. Functionally, a core subunit of photosystem II (PSII), probably helps stabilize the reaction center. This is Photosystem II reaction center protein Psb30 from Microcystis aeruginosa (strain NIES-843 / IAM M-2473).